The chain runs to 208 residues: Guanylate kinase (208 aa).

The Guanylate kinase-like domain maps to glycine 4–arginine 182. Alanine 11 to threonine 18 contributes to the ATP binding site.

It belongs to the guanylate kinase family.

Its subcellular location is the cytoplasm. It carries out the reaction GMP + ATP = GDP + ADP. Its function is as follows. Essential for recycling GMP and indirectly, cGMP. The sequence is that of Guanylate kinase from Hahella chejuensis (strain KCTC 2396).